Here is a 37-residue protein sequence, read N- to C-terminus: Large ribosomal subunit protein bL36 (37 aa).

It belongs to the bacterial ribosomal protein bL36 family.

The polypeptide is Large ribosomal subunit protein bL36 (Ureaplasma urealyticum serovar 10 (strain ATCC 33699 / Western)).